A 394-amino-acid polypeptide reads, in one-letter code: Alanine--glyoxylate aminotransferase (394 aa).

Pyridoxal 5'-phosphate contacts are provided by residues 76–78 (AGH), Ser153, and Gln204. Residue Ser153 coordinates substrate. Lys205 is subject to N6-(pyridoxal phosphate)lysine. 2 residues coordinate pyridoxal 5'-phosphate: Tyr256 and Thr259. Substrate is bound at residue Arg356.

This sequence belongs to the class-V pyridoxal-phosphate-dependent aminotransferase family. As to quaternary structure, homodimer. Pyridoxal 5'-phosphate serves as cofactor.

It is found in the peroxisome. It carries out the reaction glyoxylate + L-alanine = glycine + pyruvate. The enzyme catalyses (2S)-2-aminobutanoate + glyoxylate = 2-oxobutanoate + glycine. It catalyses the reaction glyoxylate + L-phenylalanine = 3-phenylpyruvate + glycine. The catalysed reaction is glyoxylate + L-serine = 3-hydroxypyruvate + glycine. It carries out the reaction 2-oxobutanoate + L-alanine = (2S)-2-aminobutanoate + pyruvate. The enzyme catalyses L-phenylalanine + pyruvate = 3-phenylpyruvate + L-alanine. It catalyses the reaction L-serine + pyruvate = 3-hydroxypyruvate + L-alanine. In terms of biological role, catalyzes the pyridoxal 5'-phosphate-dependent transamination of alanine with glyoxylate as an amino group acceptor. Can also catalyze, although with much less efficiency, the transamination of amino-butyrate, phenylalanine and serine with glyoxylate or pyruvate as an amino group acceptor. Does not catalyze the transamination of both 3-hydroxykynurenine and L-kynurenine. May play a role in the detoxification of glyoxylate, a toxic plant metabolite from the fly diet. The chain is Alanine--glyoxylate aminotransferase from Drosophila melanogaster (Fruit fly).